The sequence spans 198 residues: Ribonuclease HII (198 aa).

An RNase H type-2 domain is found at 2–191 (VLECGVDETG…IRELLVGKDN (190 aa)). Positions 8, 9, and 100 each coordinate a divalent metal cation.

Belongs to the RNase HII family. It depends on Mn(2+) as a cofactor. Requires Mg(2+) as cofactor.

Its subcellular location is the cytoplasm. The enzyme catalyses Endonucleolytic cleavage to 5'-phosphomonoester.. Endonuclease that specifically degrades the RNA of RNA-DNA hybrids. The protein is Ribonuclease HII of Desulforamulus reducens (strain ATCC BAA-1160 / DSM 100696 / MI-1) (Desulfotomaculum reducens).